A 164-amino-acid polypeptide reads, in one-letter code: Pheromone-binding protein (164 aa).

Residues 1–22 form the signal peptide; the sequence is MSIQGQIALALMVNMAVGSVDA. 3 disulfides stabilise this stretch: Cys-41-Cys-76, Cys-72-Cys-130, and Cys-119-Cys-139.

Belongs to the PBP/GOBP family. Homodimer. Antenna.

This major soluble protein in olfactory sensilla of male moths serves to solubilize the extremely hydrophobic pheromone molecules such as bombykol and to transport pheromone through the aqueous lymph to receptors located on olfactory cilia. The protein is Pheromone-binding protein of Bombyx mori (Silk moth).